The following is a 455-amino-acid chain: Chromosomal replication initiator protein DnaA 2 (455 aa).

A domain I, interacts with DnaA modulators region spans residues 1–95 (MLTCNDCSTW…KRSSPLVTPS (95 aa)). The tract at residues 96–112 (IAKPATEVSEENKDFQL) is domain II. Residues 113–328 (KLNGAYRFDN…GAINKLTAYC (216 aa)) are domain III, AAA+ region. ATP is bound by residues glycine 157, glycine 159, lysine 160, and threonine 161. The tract at residues 329–455 (LLFNKPLTET…IAIDSPQHFV (127 aa)) is domain IV, binds dsDNA.

This sequence belongs to the DnaA family. As to quaternary structure, oligomerizes as a right-handed, spiral filament on DNA at oriC.

The protein resides in the cytoplasm. In terms of biological role, plays an essential role in the initiation and regulation of chromosomal replication. ATP-DnaA binds to the origin of replication (oriC) to initiate formation of the DNA replication initiation complex once per cell cycle. Binds the DnaA box (a 9 base pair repeat at the origin) and separates the double-stranded (ds)DNA. Forms a right-handed helical filament on oriC DNA; dsDNA binds to the exterior of the filament while single-stranded (ss)DNA is stabiized in the filament's interior. The ATP-DnaA-oriC complex binds and stabilizes one strand of the AT-rich DNA unwinding element (DUE), permitting loading of DNA polymerase. After initiation quickly degrades to an ADP-DnaA complex that is not apt for DNA replication. Binds acidic phospholipids. In Chlamydia trachomatis serovar D (strain ATCC VR-885 / DSM 19411 / UW-3/Cx), this protein is Chromosomal replication initiator protein DnaA 2.